The chain runs to 144 residues: Large ribosomal subunit protein uL15 (144 aa).

Positions 1–48 are disordered; sequence MQLNNLKPADGSKHAKRRVGRGIGSGLGKTAGRGHKGQKSRSGGFHKV. Gly residues predominate over residues 21-31; the sequence is RGIGSGLGKTA.

Belongs to the universal ribosomal protein uL15 family. Part of the 50S ribosomal subunit.

In terms of biological role, binds to the 23S rRNA. The polypeptide is Large ribosomal subunit protein uL15 (Cupriavidus metallidurans (strain ATCC 43123 / DSM 2839 / NBRC 102507 / CH34) (Ralstonia metallidurans)).